The following is a 151-amino-acid chain: MPKIDKPLAQKVDERVFEQLLKYNPQTQNLWDIVGIFENERQKLRIEIAQYHEDIKNSQAKLKELREGITKAQNILRAIEQKISESPVPPEKEESQKEALMLKISELELENSKLLVELRDLKSEYQLEENLHQMQNMRETLQESLEDPSKP.

Residues 35–147 (GIFENERQKL…RETLQESLED (113 aa)) adopt a coiled-coil conformation.

This is an uncharacterized protein from Helicobacter hepaticus (strain ATCC 51449 / 3B1).